Reading from the N-terminus, the 224-residue chain is Non-structural protein V (224 aa).

Positions 55-65 (KNIQYPTTSHQ) are enriched in polar residues. 2 disordered regions span residues 55–90 (KNIQ…GTGG) and 145–172 (TSTP…GHRR). Zn(2+) is bound by residues histidine 170, cysteine 189, cysteine 193, cysteine 205, cysteine 207, cysteine 210, cysteine 214, and cysteine 217.

Belongs to the paramyxoviruses V protein family. Interacts with host IFIH1/MDA5 and DHX58/LGP2. Forms with host DDB1, CUL4A, STAT1, STAT2 and STAT3 the mumps virus V-dependent complex (VDC).

The protein localises to the virion. The protein resides in the host cytoplasm. In terms of biological role, plays an essential role in the inhibition of host immune response. Prevents the establishment of cellular antiviral state by blocking interferon-alpha/beta (IFN-alpha/beta) production and signaling pathway. Interacts with host IFIH1/MDA5 and DHX58/LGP2 to inhibit the transduction pathway involved in the activation of IFN-beta promoter, thus protecting the virus against cell antiviral state. Blocks the type I and II interferon signaling pathways by interacting with host STAT1, STAT2 and STAT3, and mediating their ubiquitination and subsequent proteasomal degradation. The sequence is that of Non-structural protein V from Mumps virus genotype B (strain Miyahara vaccine) (MuV).